Consider the following 313-residue polypeptide: Protein FixB (313 aa).

Residue 255–283 (LYLAVGISGQIQHMVGANASQTIFAINKD) participates in FAD binding.

Belongs to the ETF alpha-subunit/FixB family. Heterodimer of FixA and FixB.

Its pathway is amine and polyamine metabolism; carnitine metabolism. Required for anaerobic carnitine reduction. May bring reductant to CaiA. This is Protein FixB from Escherichia coli O1:K1 / APEC.